The following is a 502-amino-acid chain: MTALPAHLERVHMVGIGGAGMSGIARILLSRGGLVSGSDAKESRGVLALRARGAQVRIGHDADALDLLPGGPTVVVTTHAAIPKDNPELVEAARRGIPVILRPAVLASLMQGNRTFLVSGTHGKTSTTSMLVVALQHCGFDPSFAVGGELNEAGTNAHHGSGDVFVAEADESDGSLLQYDPNVIVVTNIEADHLDYFGSVEAYVKVFDDFVDKLRPGGLLIACLDDPGSADLAKRIVASGRSDIRVLGYGSADAQEVEAGTAFEPVDGVEVGVRLLGFHAHDVGGVLQFQLAGENAARTVRMAVPGRHMALNALAALLAARDAGAETEEIVEGLAGFGGVHRRFQFTGRERGVRVFDDYAHHPTEVRAVLGAAADLVRPEDDSSSTNSAAGRVIVVFQPHLYSRTAAFAVEFAQALDLADEVVVLDVYGAREEPMPGVSGALVAQSVTKPVHYQPDLSQAPKQVAALAHPGDIVITMGAGDVTMLGKQILDALRSAPHPAPR.

Position 120 to 126 (120 to 126 (GTHGKTS)) interacts with ATP.

It belongs to the MurCDEF family.

The protein resides in the cytoplasm. It catalyses the reaction UDP-N-acetyl-alpha-D-muramate + L-alanine + ATP = UDP-N-acetyl-alpha-D-muramoyl-L-alanine + ADP + phosphate + H(+). Its pathway is cell wall biogenesis; peptidoglycan biosynthesis. Functionally, cell wall formation. The sequence is that of UDP-N-acetylmuramate--L-alanine ligase from Rhodococcus erythropolis (strain PR4 / NBRC 100887).